A 555-amino-acid polypeptide reads, in one-letter code: 2-succinyl-5-enolpyruvyl-6-hydroxy-3-cyclohexene-1-carboxylate synthase (555 aa).

This sequence belongs to the TPP enzyme family. MenD subfamily. As to quaternary structure, homodimer. Mg(2+) is required as a cofactor. Mn(2+) serves as cofactor. It depends on thiamine diphosphate as a cofactor.

The catalysed reaction is isochorismate + 2-oxoglutarate + H(+) = 5-enolpyruvoyl-6-hydroxy-2-succinyl-cyclohex-3-ene-1-carboxylate + CO2. The protein operates within quinol/quinone metabolism; 1,4-dihydroxy-2-naphthoate biosynthesis; 1,4-dihydroxy-2-naphthoate from chorismate: step 2/7. It participates in quinol/quinone metabolism; menaquinone biosynthesis. Its function is as follows. Catalyzes the thiamine diphosphate-dependent decarboxylation of 2-oxoglutarate and the subsequent addition of the resulting succinic semialdehyde-thiamine pyrophosphate anion to isochorismate to yield 2-succinyl-5-enolpyruvyl-6-hydroxy-3-cyclohexene-1-carboxylate (SEPHCHC). The polypeptide is 2-succinyl-5-enolpyruvyl-6-hydroxy-3-cyclohexene-1-carboxylate synthase (Cronobacter sakazakii (strain ATCC BAA-894) (Enterobacter sakazakii)).